The following is a 340-amino-acid chain: MFYKLAQKVMFQMDPEKAHHFALNSLMATANTPLDCFYAQKIAPSPVEFMGVTFPNPVGLAAGMDKDGECIDGFHAMGFGHIEVGTVTPRPQPGNDLPRLFRLKPAKGIINRMGFNNKGVDNLIANLKAAKSGALIGVNIGKNKDTPVEQGKDDYLICMDKVYEYAAYIAVNISSPNTPGLRSLQYGDLLDDLLGSLKAKQKDLAQKHGKYVPIALKIAPDLSDEEIQKIADSLIKNQFDGAIATNTTLSRDGVSGLMNANETGGLSGKPLNLLSTSVIKKLSSCLNGQIPIIGVGGINSAADAIDKLDAGASMVQIYSGFIYQGPKLIKDIIEACRVRK.

Residues 62–66 (AGMDK) and T86 contribute to the FMN site. K66 contributes to the substrate binding site. 111–115 (NRMGF) lines the substrate pocket. FMN is bound by residues N139 and N172. N172 serves as a coordination point for substrate. Residue S175 is the Nucleophile of the active site. A substrate-binding site is contributed by N177. K217 and T245 together coordinate FMN. 246 to 247 (NT) serves as a coordination point for substrate. FMN contacts are provided by residues G268, G297, and 318 to 319 (YS).

This sequence belongs to the dihydroorotate dehydrogenase family. Type 2 subfamily. In terms of assembly, monomer. FMN serves as cofactor.

It localises to the cell membrane. The enzyme catalyses (S)-dihydroorotate + a quinone = orotate + a quinol. The protein operates within pyrimidine metabolism; UMP biosynthesis via de novo pathway; orotate from (S)-dihydroorotate (quinone route): step 1/1. Its function is as follows. Catalyzes the conversion of dihydroorotate to orotate with quinone as electron acceptor. The protein is Dihydroorotate dehydrogenase (quinone) of Shewanella woodyi (strain ATCC 51908 / MS32).